Reading from the N-terminus, the 341-residue chain is Eukaryotic translation initiation factor 3 subunit I (341 aa).

WD repeat units follow at residues 8 to 47 (GHERSLNQIVFNSEGDLLFSASKDSVVNAWYTSNGERLGT), 56 to 95 (GHNGSVWTVAVDSQTRFLLTGGADNAMKLWEVKTGECLYT), 151 to 190 (LSGSRATVAIWAPLSDYIITGHESGKIAKYDVKTGEEVQA), 194 to 233 (EHSALISDIQLSPDGTYFITASKDKTARLWDIETLEVMKV), 235 to 274 (TTETPVNSAVITPDRPYIILGGGQDAMNVTTTSQRAGKFE), and 291 to 331 (GHFG…RSRP).

Belongs to the eIF-3 subunit I family. As to quaternary structure, component of the eukaryotic translation initiation factor 3 (eIF-3) complex.

It is found in the cytoplasm. Functionally, component of the eukaryotic translation initiation factor 3 (eIF-3) complex, which is involved in protein synthesis of a specialized repertoire of mRNAs and, together with other initiation factors, stimulates binding of mRNA and methionyl-tRNAi to the 40S ribosome. The eIF-3 complex specifically targets and initiates translation of a subset of mRNAs involved in cell proliferation. The polypeptide is Eukaryotic translation initiation factor 3 subunit I (Cryptococcus neoformans var. neoformans serotype D (strain B-3501A) (Filobasidiella neoformans)).